We begin with the raw amino-acid sequence, 511 residues long: Exodeoxyribonuclease 7 large subunit (511 aa).

The protein belongs to the XseA family. Heterooligomer composed of large and small subunits.

The protein resides in the cytoplasm. The catalysed reaction is Exonucleolytic cleavage in either 5'- to 3'- or 3'- to 5'-direction to yield nucleoside 5'-phosphates.. Bidirectionally degrades single-stranded DNA into large acid-insoluble oligonucleotides, which are then degraded further into small acid-soluble oligonucleotides. This chain is Exodeoxyribonuclease 7 large subunit, found in Brucella ovis (strain ATCC 25840 / 63/290 / NCTC 10512).